The following is a 258-amino-acid chain: Ribosomal RNA small subunit methyltransferase A (258 aa).

Residues Asn-12, Leu-14, Gly-38, Glu-59, Asp-83, and Asn-100 each coordinate S-adenosyl-L-methionine.

It belongs to the class I-like SAM-binding methyltransferase superfamily. rRNA adenine N(6)-methyltransferase family. RsmA subfamily.

Its subcellular location is the cytoplasm. It carries out the reaction adenosine(1518)/adenosine(1519) in 16S rRNA + 4 S-adenosyl-L-methionine = N(6)-dimethyladenosine(1518)/N(6)-dimethyladenosine(1519) in 16S rRNA + 4 S-adenosyl-L-homocysteine + 4 H(+). Functionally, specifically dimethylates two adjacent adenosines (A1518 and A1519) in the loop of a conserved hairpin near the 3'-end of 16S rRNA in the 30S particle. May play a critical role in biogenesis of 30S subunits. This Metamycoplasma arthritidis (strain 158L3-1) (Mycoplasma arthritidis) protein is Ribosomal RNA small subunit methyltransferase A.